The primary structure comprises 215 residues: Variable small protein 6 (215 aa).

An N-terminal signal peptide occupies residues 1-18 (MRKRISAIIMTLFMVFMS). C19 carries the N-palmitoyl cysteine lipid modification. C19 carries the S-diacylglycerol cysteine lipid modification.

Belongs to the variable small protein (Vsp) family.

It localises to the cell outer membrane. Its function is as follows. The Vlp and Vsp proteins are antigenically distinct proteins, only one vlp or vsp gene is transcriptionally active at any one time. Switching between these genes is a mechanism of host immune response evasion. This is Variable small protein 6 from Borrelia hermsii.